A 267-amino-acid chain; its full sequence is Hydroxyethylthiazole kinase (267 aa).

Methionine 51 provides a ligand contact to substrate. Residues arginine 127 and serine 173 each coordinate ATP. Alanine 200 provides a ligand contact to substrate.

Belongs to the Thz kinase family. The cofactor is Mg(2+).

It carries out the reaction 5-(2-hydroxyethyl)-4-methylthiazole + ATP = 4-methyl-5-(2-phosphooxyethyl)-thiazole + ADP + H(+). It participates in cofactor biosynthesis; thiamine diphosphate biosynthesis; 4-methyl-5-(2-phosphoethyl)-thiazole from 5-(2-hydroxyethyl)-4-methylthiazole: step 1/1. Its function is as follows. Catalyzes the phosphorylation of the hydroxyl group of 4-methyl-5-beta-hydroxyethylthiazole (THZ). This Psychromonas ingrahamii (strain DSM 17664 / CCUG 51855 / 37) protein is Hydroxyethylthiazole kinase.